The primary structure comprises 291 residues: Probable 2-(5''-triphosphoribosyl)-3'-dephosphocoenzyme-A synthase (291 aa).

It belongs to the CitG/MdcB family.

The enzyme catalyses 3'-dephospho-CoA + ATP = 2'-(5''-triphospho-alpha-D-ribosyl)-3'-dephospho-CoA + adenine. Functionally, involved in the formation of 2-(5''-phosphoribosyl)-3'-dephosphocoenzyme-A, the prosthetic group of the acyl-carrier protein of the malonate decarboxylase. The protein is Probable 2-(5''-triphosphoribosyl)-3'-dephosphocoenzyme-A synthase of Pseudomonas syringae pv. syringae (strain B728a).